A 166-amino-acid polypeptide reads, in one-letter code: Large ribosomal subunit protein uL10 (166 aa).

Belongs to the universal ribosomal protein uL10 family. Part of the ribosomal stalk of the 50S ribosomal subunit. The N-terminus interacts with L11 and the large rRNA to form the base of the stalk. The C-terminus forms an elongated spine to which L12 dimers bind in a sequential fashion forming a multimeric L10(L12)X complex.

Its function is as follows. Forms part of the ribosomal stalk, playing a central role in the interaction of the ribosome with GTP-bound translation factors. This Ectopseudomonas mendocina (strain ymp) (Pseudomonas mendocina) protein is Large ribosomal subunit protein uL10.